The sequence spans 368 residues: MVTGWHRPTWIEIDRAAIRENIKNEQNKLPDKVALWAVVKANAYGHGIIETAKIAKEAGAKGFCVAILDEALALREAGFRNEFILVLGATRKEDANLAAKNNISVTVFREDWLDDLTLEAPLRIHLKVDSGMGRLGIRSREEAQRIETTIAIDHQMILEGIYTHFATADQLETSYFEQQLAKFQAILSSLTTRPTFVHTANSAASLLQPQIDFDAIRFGISMYGLTPSTEIKNSLPFELKPALALYTEMVHVKELAPGDSVSYGATYTATEKEWVATLPIGYADGLIRHYSGFHVLVEGERAPIIGRICMDQTIIKLPREFQTGTKVTIIGSDHGNKVTADDAAEYLGTINYEVTCLLTERIPRKYIN.

Residue K40 is the Proton acceptor; specific for D-alanine of the active site. Position 40 is an N6-(pyridoxal phosphate)lysine (K40). R134 serves as a coordination point for substrate. Y263 serves as the catalytic Proton acceptor; specific for L-alanine. M310 serves as a coordination point for substrate.

The protein belongs to the alanine racemase family. Requires pyridoxal 5'-phosphate as cofactor.

The enzyme catalyses L-alanine = D-alanine. It functions in the pathway amino-acid biosynthesis; D-alanine biosynthesis; D-alanine from L-alanine: step 1/1. In terms of biological role, catalyzes the interconversion of L-alanine and D-alanine. May also act on other amino acids. The sequence is that of Alanine racemase (alr) from Listeria innocua serovar 6a (strain ATCC BAA-680 / CLIP 11262).